A 317-amino-acid chain; its full sequence is Acetyl-coenzyme A carboxylase carboxyl transferase subunit beta (317 aa).

A disordered region spans residues 1-28 (MANNMTDTMTKPDINNDSTSLQQNGNKA). The region spanning 55-317 (PSTKCSSCHS…LCSVPNVDVQ (263 aa)) is the CoA carboxyltransferase N-terminal domain. The Zn(2+) site is built by Cys59, Cys62, Cys78, and Cys81. The C4-type zinc-finger motif lies at 59-81 (CSSCHSIITNTALIFNCYVCPHC).

It belongs to the AccD/PCCB family. Acetyl-CoA carboxylase is a heterohexamer composed of biotin carboxyl carrier protein (AccB), biotin carboxylase (AccC) and two subunits each of ACCase subunit alpha (AccA) and ACCase subunit beta (AccD). Zn(2+) is required as a cofactor.

The protein localises to the cytoplasm. It catalyses the reaction N(6)-carboxybiotinyl-L-lysyl-[protein] + acetyl-CoA = N(6)-biotinyl-L-lysyl-[protein] + malonyl-CoA. The protein operates within lipid metabolism; malonyl-CoA biosynthesis; malonyl-CoA from acetyl-CoA: step 1/1. In terms of biological role, component of the acetyl coenzyme A carboxylase (ACC) complex. Biotin carboxylase (BC) catalyzes the carboxylation of biotin on its carrier protein (BCCP) and then the CO(2) group is transferred by the transcarboxylase to acetyl-CoA to form malonyl-CoA. This Psychrobacter cryohalolentis (strain ATCC BAA-1226 / DSM 17306 / VKM B-2378 / K5) protein is Acetyl-coenzyme A carboxylase carboxyl transferase subunit beta.